We begin with the raw amino-acid sequence, 499 residues long: Putative protease Do-like 12, mitochondrial (499 aa).

A mitochondrion-targeting transit peptide spans 1 to 24; that stretch reads MLFRSCVGMVSRYSRALLPTITIS. Residues 94–259 are serine protease; it reads GGSGFAIAGK…IPTPIIRHFI (166 aa). Residues His110, Asp144, and Ser222 each act as charge relay system in the active site. Positions 272-356 constitute a PDZ domain; the sequence is GSLVLSCQSM…DENILVKVLR (85 aa).

Belongs to the peptidase S1C family.

Its subcellular location is the mitochondrion matrix. Functionally, putative serine protease. In Arabidopsis thaliana (Mouse-ear cress), this protein is Putative protease Do-like 12, mitochondrial (DEGP12).